The sequence spans 132 residues: NADH-quinone oxidoreductase subunit A (132 aa).

Helical transmembrane passes span 7–27, 62–82, and 91–111; these read YWVLLVYTFVVIALVAGMIGV, FYLIAMFFVIFDLEAAYLYAW, and WTGYLVIAVFILALLAALAYL.

It belongs to the complex I subunit 3 family. NDH-1 is composed of 14 different subunits. Subunits NuoA, H, J, K, L, M, N constitute the membrane sector of the complex.

Its subcellular location is the cell inner membrane. The catalysed reaction is a quinone + NADH + 5 H(+)(in) = a quinol + NAD(+) + 4 H(+)(out). Its function is as follows. NDH-1 shuttles electrons from NADH, via FMN and iron-sulfur (Fe-S) centers, to quinones in the respiratory chain. The immediate electron acceptor for the enzyme in this species is believed to be ubiquinone. Couples the redox reaction to proton translocation (for every two electrons transferred, four hydrogen ions are translocated across the cytoplasmic membrane), and thus conserves the redox energy in a proton gradient. In Acidiphilium cryptum (strain JF-5), this protein is NADH-quinone oxidoreductase subunit A.